The primary structure comprises 125 residues: Small ribosomal subunit protein bS6 (125 aa).

The segment at proline 99–glutamine 125 is disordered. Over residues serine 105–serine 115 the composition is skewed to basic and acidic residues. Positions threonine 116–glutamine 125 are enriched in polar residues.

It belongs to the bacterial ribosomal protein bS6 family.

Functionally, binds together with bS18 to 16S ribosomal RNA. The protein is Small ribosomal subunit protein bS6 of Bordetella petrii (strain ATCC BAA-461 / DSM 12804 / CCUG 43448).